The sequence spans 868 residues: DNA topoisomerase 1 (868 aa).

The region spanning 3–148 (KSLVIVESPA…RFSRVVFNEI (146 aa)) is the Toprim domain. 2 residues coordinate Mg(2+): glutamate 9 and aspartate 117. The Topo IA-type catalytic domain maps to 164 to 581 (NLDRVNAQQT…QFFKDFSQQL (418 aa)). Residues 198–203 (SAGRVQ) form an interaction with DNA region. Tyrosine 325 serves as the catalytic O-(5'-phospho-DNA)-tyrosine intermediate. 3 C4-type zinc fingers span residues 605–636 (CPTC…KERC), 667–694 (CPKC…NPNC), and 716–739 (CDKC…CTSC).

This sequence belongs to the type IA topoisomerase family. Monomer. It depends on Mg(2+) as a cofactor.

It catalyses the reaction ATP-independent breakage of single-stranded DNA, followed by passage and rejoining.. Releases the supercoiling and torsional tension of DNA, which is introduced during the DNA replication and transcription, by transiently cleaving and rejoining one strand of the DNA duplex. Introduces a single-strand break via transesterification at a target site in duplex DNA. The scissile phosphodiester is attacked by the catalytic tyrosine of the enzyme, resulting in the formation of a DNA-(5'-phosphotyrosyl)-enzyme intermediate and the expulsion of a 3'-OH DNA strand. The free DNA strand then undergoes passage around the unbroken strand, thus removing DNA supercoils. Finally, in the religation step, the DNA 3'-OH attacks the covalent intermediate to expel the active-site tyrosine and restore the DNA phosphodiester backbone. The chain is DNA topoisomerase 1 from Pasteurella multocida (strain Pm70).